Consider the following 316-residue polypeptide: MPLDTLRIATRKSPLAVWQAEHVAALVKARHPGVRVELVGMTTQGDRILDTPLAKVGGKGLFVKELETGLLEGRADIAVHSMKDVPMELPEGLCLPVILDREDPRDAFVSNTFKSLDELPRDARVGTSSLRRQCQLRHDHPHFQILDLRGNVNTRLAKLDAGEFDAIILAAAGLKRLGFEVRIASEITPEQSLPAIGQGAIGIECRENDPEVMALIGSLDDPDTHVRVAAERAMNARLNGGCQVPIAGYAELTDADTLRLRGLVGEPDGSLILRAELSGPRAEAEALGRAVADLLLHEGAGPILAELGLGPDADRS.

An S-(dipyrrolylmethanemethyl)cysteine modification is found at C242.

Belongs to the HMBS family. In terms of assembly, monomer. Dipyrromethane is required as a cofactor.

It carries out the reaction 4 porphobilinogen + H2O = hydroxymethylbilane + 4 NH4(+). It participates in porphyrin-containing compound metabolism; protoporphyrin-IX biosynthesis; coproporphyrinogen-III from 5-aminolevulinate: step 2/4. Tetrapolymerization of the monopyrrole PBG into the hydroxymethylbilane pre-uroporphyrinogen in several discrete steps. In Thioalkalivibrio sulfidiphilus (strain HL-EbGR7), this protein is Porphobilinogen deaminase.